We begin with the raw amino-acid sequence, 159 residues long: Putative 4-hydroxy-4-methyl-2-oxoglutarate aldolase (159 aa).

Substrate is bound by residues 75 to 78 (GDQL) and Arg97. An a divalent metal cation-binding site is contributed by Asp98.

This sequence belongs to the class II aldolase/RraA-like family. Homotrimer. The cofactor is a divalent metal cation.

It catalyses the reaction 4-hydroxy-4-methyl-2-oxoglutarate = 2 pyruvate. The catalysed reaction is oxaloacetate + H(+) = pyruvate + CO2. Catalyzes the aldol cleavage of 4-hydroxy-4-methyl-2-oxoglutarate (HMG) into 2 molecules of pyruvate. Also contains a secondary oxaloacetate (OAA) decarboxylase activity due to the common pyruvate enolate transition state formed following C-C bond cleavage in the retro-aldol and decarboxylation reactions. This Laribacter hongkongensis (strain HLHK9) protein is Putative 4-hydroxy-4-methyl-2-oxoglutarate aldolase.